Reading from the N-terminus, the 501-residue chain is MESRLGWLTDLSTETGTNLRRTSIICTIGPKTNNPETLVELRKAGMNIVRMNFSHGSYEYHQSVIDNARKSEELYQGRPLAIALDTKGPEIRTGTTTNDVDYPIPPNHEMIFTTDDKYAKACDDKTMYVDYKNITKVIEAGRIIYVDDGVLSFEVLEVIDDNTLKVKSLNAGKICSHKGVNLPGTDVDLPALSEKDKSDLKFGVKNGVHMVFASFIRTAQDVLTIREVLGEQGKDIKIIVKIENQQGVNNFDDILKVTDGVMVARGDLGIEIPAPQVFAVQKKLIAKCNLAGKPVICATQMLESMTYNPRPTRAEVSDVGNAVLDGADCVMLSGETAKGNYPINAVKTMAETALIAEQAIPYIPTYDDLRNLTPKPTSTTETIAAASVSAVFEQKARALIVLSTTGDTPRLVAKYKPNVPIVMVTRNPRAARFSHLYRGVFPFVYDESSDSEWTVDVEKRINFGVKKAKEFGILVDGDTIVTIQGFAAGVGNSNTLRVLTV.

A substrate-binding site is contributed by arginine 50. K(+)-binding residues include asparagine 52, serine 54, aspartate 85, and threonine 86. 52–55 contacts ATP; the sequence is NFSH. 2 residues coordinate ATP: arginine 92 and lysine 178. Glutamate 243 provides a ligand contact to Mg(2+). 3 residues coordinate substrate: glycine 266, aspartate 267, and threonine 299. Aspartate 267 provides a ligand contact to Mg(2+).

Belongs to the pyruvate kinase family. As to quaternary structure, homotetramer. Mg(2+) is required as a cofactor. K(+) serves as cofactor.

The catalysed reaction is pyruvate + ATP = phosphoenolpyruvate + ADP + H(+). Its pathway is carbohydrate degradation; glycolysis; pyruvate from D-glyceraldehyde 3-phosphate: step 5/5. The sequence is that of Pyruvate kinase (PYK1) from Kluyveromyces lactis (strain ATCC 8585 / CBS 2359 / DSM 70799 / NBRC 1267 / NRRL Y-1140 / WM37) (Yeast).